The following is a 195-amino-acid chain: Orotate phosphoribosyltransferase (195 aa).

5-phospho-alpha-D-ribose 1-diphosphate-binding positions include R86, K90, H92, and 111–119 (DDVATTGVS). T115 and R143 together coordinate orotate.

It belongs to the purine/pyrimidine phosphoribosyltransferase family. PyrE subfamily. Homodimer. Mg(2+) is required as a cofactor.

The enzyme catalyses orotidine 5'-phosphate + diphosphate = orotate + 5-phospho-alpha-D-ribose 1-diphosphate. It participates in pyrimidine metabolism; UMP biosynthesis via de novo pathway; UMP from orotate: step 1/2. Catalyzes the transfer of a ribosyl phosphate group from 5-phosphoribose 1-diphosphate to orotate, leading to the formation of orotidine monophosphate (OMP). The protein is Orotate phosphoribosyltransferase of Saccharolobus solfataricus (strain ATCC 35092 / DSM 1617 / JCM 11322 / P2) (Sulfolobus solfataricus).